We begin with the raw amino-acid sequence, 173 residues long: Photosystem I assembly protein Ycf3 (173 aa).

TPR repeat units lie at residues 35–68 (AYVY…EESP), 72–105 (SETL…NSNQ), and 120–153 (GRTA…YPGG).

This sequence belongs to the Ycf3 family.

It is found in the cellular thylakoid membrane. In terms of biological role, essential for the assembly of the photosystem I (PSI) complex. May act as a chaperone-like factor to guide the assembly of the PSI subunits. In Prochlorococcus marinus (strain MIT 9303), this protein is Photosystem I assembly protein Ycf3.